Here is a 179-residue protein sequence, read N- to C-terminus: Large ribosomal subunit protein uL5 (179 aa).

Belongs to the universal ribosomal protein uL5 family. As to quaternary structure, part of the 50S ribosomal subunit; part of the 5S rRNA/L5/L18/L25 subcomplex. Contacts the 5S rRNA and the P site tRNA. Forms a bridge to the 30S subunit in the 70S ribosome.

Functionally, this is one of the proteins that bind and probably mediate the attachment of the 5S RNA into the large ribosomal subunit, where it forms part of the central protuberance. In the 70S ribosome it contacts protein S13 of the 30S subunit (bridge B1b), connecting the 2 subunits; this bridge is implicated in subunit movement. Contacts the P site tRNA; the 5S rRNA and some of its associated proteins might help stabilize positioning of ribosome-bound tRNAs. The chain is Large ribosomal subunit protein uL5 from Prochlorococcus marinus (strain MIT 9215).